We begin with the raw amino-acid sequence, 90 residues long: Probable Fe(2+)-trafficking protein (90 aa).

Belongs to the Fe(2+)-trafficking protein family. Monomer.

Its function is as follows. Could be a mediator in iron transactions between iron acquisition and iron-requiring processes, such as synthesis and/or repair of Fe-S clusters in biosynthetic enzymes. This is Probable Fe(2+)-trafficking protein from Serratia proteamaculans (strain 568).